Here is a 283-residue protein sequence, read N- to C-terminus: Formamidopyrimidine-DNA glycosylase (283 aa).

Pro-2 (schiff-base intermediate with DNA) is an active-site residue. Glu-3 functions as the Proton donor in the catalytic mechanism. Lys-60 (proton donor; for beta-elimination activity) is an active-site residue. DNA contacts are provided by His-95, Arg-114, and Arg-159. The FPG-type zinc-finger motif lies at Trp-244–Pro-278. Arg-268 (proton donor; for delta-elimination activity) is an active-site residue.

This sequence belongs to the FPG family. In terms of assembly, monomer. Requires Zn(2+) as cofactor.

The enzyme catalyses Hydrolysis of DNA containing ring-opened 7-methylguanine residues, releasing 2,6-diamino-4-hydroxy-5-(N-methyl)formamidopyrimidine.. It catalyses the reaction 2'-deoxyribonucleotide-(2'-deoxyribose 5'-phosphate)-2'-deoxyribonucleotide-DNA = a 3'-end 2'-deoxyribonucleotide-(2,3-dehydro-2,3-deoxyribose 5'-phosphate)-DNA + a 5'-end 5'-phospho-2'-deoxyribonucleoside-DNA + H(+). Its function is as follows. Involved in base excision repair of DNA damaged by oxidation or by mutagenic agents. Acts as a DNA glycosylase that recognizes and removes damaged bases. Has a preference for oxidized purines, such as 7,8-dihydro-8-oxoguanine (8-oxoG). Has AP (apurinic/apyrimidinic) lyase activity and introduces nicks in the DNA strand. Cleaves the DNA backbone by beta-delta elimination to generate a single-strand break at the site of the removed base with both 3'- and 5'-phosphates. The protein is Formamidopyrimidine-DNA glycosylase of Crocosphaera subtropica (strain ATCC 51142 / BH68) (Cyanothece sp. (strain ATCC 51142)).